Here is a 2209-residue protein sequence, read N- to C-terminus: Genome polyprotein (2209 aa).

G2 carries N-myristoyl glycine; by host lipidation. At 2 to 1520 (GAQVSSQKVG…NINRAMTILQ (1519 aa)) the chain is on the cytoplasmic side. An amphipathic alpha-helix region spans residues 580-600 (GLGQMLESMIDNTVRETVGAA). Residues H901 and D919 each act as for protease 2A activity in the active site. 2 residues coordinate Zn(2+): C936 and C938. C990 acts as the For protease 2A activity in catalysis. Positions 996 and 998 each coordinate Zn(2+). Positions 1128 to 1200 (GDSWLKKFTE…HQSCPSQEHQ (73 aa)) are membrane-binding. Residues 1128–1266 (GDSWLKKFTE…SPGTGKSVAT (139 aa)) form an oligomerization region. The tract at residues 1149 to 1153 (SNKIS) is RNA-binding. The SF3 helicase domain maps to 1232-1388 (EHTINNYIQF…NEYSRDGKLN (157 aa)). 1256-1263 (GSPGTGKS) is a binding site for ATP. Zn(2+) contacts are provided by C1396, C1399, C1408, and C1413. Residues 1396-1413 (CKNCHQPANFKRCCPLVC) form a C4-type zinc finger. The segment at 1440–1447 (ERNRRSNI) is RNA-binding. The segment at 1451–1456 (MEALFQ) is oligomerization. An intramembrane segment occupies 1521–1536 (AVTTFAAVAGVVYVMY). Over 1537–2209 (KLFAGHQGAY…TLYRRWLDSF (673 aa)) the chain is Cytoplasmic. O-(5'-phospho-RNA)-tyrosine is present on Y1546. Residues 1566–1744 (GPGFDYAVAM…FAAALKRSYF (179 aa)) form the Peptidase C3 domain. Catalysis depends on for protease 3C activity residues H1605, E1636, and C1712. The 116-residue stretch at 1975–2090 (EKLFAFDYTG…SYPHEVDASL (116 aa)) folds into the RdRp catalytic domain. Mg(2+)-binding residues include D1981 and D2076.

It belongs to the picornaviruses polyprotein family. In terms of assembly, interacts with capsid protein VP1 and capsid protein VP3 to form heterotrimeric protomers. As to quaternary structure, interacts with capsid protein VP0, and capsid protein VP3 to form heterotrimeric protomers. Interacts with human PVR. Five protomers subsequently associate to form pentamers which serve as building blocks for the capsid. Interacts with capsid protein VP2, capsid protein VP3 and capsid protein VP4 following cleavage of capsid protein VP0. Interacts with capsid protein VP1 and capsid protein VP3 in the mature capsid. In terms of assembly, interacts with capsid protein VP0 and capsid protein VP1 to form heterotrimeric protomers. Five protomers subsequently associate to form pentamers which serve as building blocks for the capsid. Interacts with capsid protein VP4 in the mature capsid. Interacts with protein 2C; this interaction may be important for virion morphogenesis. As to quaternary structure, interacts with capsid protein VP1 and capsid protein VP3. Homodimer. In terms of assembly, homohexamer; forms a hexameric ring structure with 6-fold symmetry characteristic of AAA+ ATPases. Interacts (via N-terminus) with host RTN3 (via reticulon domain); this interaction is important for viral replication. Interacts with capsid protein VP3; this interaction may be important for virion morphogenesis. As to quaternary structure, interacts with protein 3CD. Homodimer. Interacts with host GBF1. Interacts (via GOLD domain) with host ACBD3 (via GOLD domain); this interaction allows the formation of a viral protein 3A/ACBD3 heterotetramer with a 2:2 stoichiometry, which will stimulate the recruitment of host PI4KB in order to synthesize PI4P at the viral RNA replication sites. In terms of assembly, interacts with RNA-directed RNA polymerase. As to quaternary structure, interacts with protein 3AB and with RNA-directed RNA polymerase. Interacts with Viral protein genome-linked and with protein 3CD. Mg(2+) is required as a cofactor. In terms of processing, specific enzymatic cleavages in vivo by the viral proteases yield processing intermediates and the mature proteins. Myristoylation is required for the formation of pentamers during virus assembly. Further assembly of 12 pentamers and a molecule of genomic RNA generates the provirion. Post-translationally, during virion maturation, immature virions are rendered infectious following cleavage of VP0 into VP4 and VP2. This maturation seems to be an autocatalytic event triggered by the presence of RNA in the capsid and it is followed by a conformational change infectious virion. In terms of processing, myristoylation is required during RNA encapsidation and formation of the mature virus particle. VPg is uridylylated by the polymerase into VPg-pUpU. This acts as a nucleotide-peptide primer for the genomic RNA replication.

It is found in the virion. It localises to the host cytoplasm. The protein localises to the host cytoplasmic vesicle membrane. The protein resides in the host nucleus. The enzyme catalyses a ribonucleoside 5'-triphosphate + H2O = a ribonucleoside 5'-diphosphate + phosphate + H(+). It carries out the reaction Selective cleavage of Tyr-|-Gly bond in the picornavirus polyprotein.. The catalysed reaction is RNA(n) + a ribonucleoside 5'-triphosphate = RNA(n+1) + diphosphate. It catalyses the reaction Selective cleavage of Gln-|-Gly bond in the poliovirus polyprotein. In other picornavirus reactions Glu may be substituted for Gln, and Ser or Thr for Gly.. Its activity is regulated as follows. Replication or transcription is subject to high level of random mutations by the nucleotide analog ribavirin. Forms an icosahedral capsid of pseudo T=3 symmetry with capsid proteins VP2 and VP3. The capsid is 300 Angstroms in diameter, composed of 60 copies of each capsid protein and enclosing the viral positive strand RNA genome. Capsid protein VP1 mainly forms the vertices of the capsid. Capsid protein VP1 interacts with host cell receptor PVR to provide virion attachment to target host cells. This attachment induces virion internalization predominantly through clathrin- and caveolin-independent endocytosis in Hela cells and through caveolin-mediated endocytosis in brain microvascular endothelial cells. Tyrosine kinases are probably involved in the entry process. Virus binding to PVR induces increased junctional permeability and rearrangement of junctional proteins. Modulation of endothelial tight junctions, as well as cytolytic infection of endothelial cells themselves, may result in loss of endothelial integrity which may help the virus to reach the CNS. After binding to its receptor, the capsid undergoes conformational changes. Capsid protein VP1 N-terminus (that contains an amphipathic alpha-helix) and capsid protein VP4 are externalized. Together, they shape a pore in the host membrane through which viral genome is translocated to host cell cytoplasm. Functionally, forms an icosahedral capsid of pseudo T=3 symmetry with capsid proteins VP2 and VP3. The capsid is 300 Angstroms in diameter, composed of 60 copies of each capsid protein and enclosing the viral positive strand RNA genome. In terms of biological role, lies on the inner surface of the capsid shell. After binding to the host receptor, the capsid undergoes conformational changes. Capsid protein VP4 is released, Capsid protein VP1 N-terminus is externalized, and together, they shape a pore in the host membrane through which the viral genome is translocated into the host cell cytoplasm. Its function is as follows. Component of immature procapsids, which is cleaved into capsid proteins VP4 and VP2 after maturation. Allows the capsid to remain inactive before the maturation step. Cysteine protease that cleaves viral polyprotein and specific host proteins. It is responsible for the autocatalytic cleavage between the P1 and P2 regions, which is the first cleavage occurring in the polyprotein. Also cleaves the host translation initiation factor EIF4G1, in order to shut down the capped cellular mRNA translation. Inhibits the host nucleus-cytoplasm protein and RNA trafficking by cleaving host members of the nuclear pores including NUP98, NUP62 and NUP153. Counteracts stress granule formation probably by antagonizing its assembly or promoting its dissassembly. Cleaves and inhibits host IFIH1/MDA5, thereby inhibiting the type-I IFN production and the establishment of the antiviral state. Cleaves and inhibits host MAVS, thereby inhibiting the type-I IFN production and the establishment of the antiviral state. Functionally, plays an essential role in the virus replication cycle by acting as a viroporin. Creates a pore in the host endoplasmic reticulum and as a consequence releases Ca2+ in the cytoplasm of infected cell. In turn, high levels of cytoplasmic calcium may trigger membrane trafficking and transport of viral ER-associated proteins to viroplasms, sites of viral genome replication. In terms of biological role, induces and associates with structural rearrangements of intracellular membranes. Displays RNA-binding, nucleotide binding and NTPase activities. May play a role in virion morphogenesis and viral RNA encapsidation by interacting with the capsid protein VP3. Its function is as follows. Localizes the viral replication complex to the surface of membranous vesicles. Together with protein 3CD binds the Cis-Active RNA Element (CRE) which is involved in RNA synthesis initiation. Acts as a cofactor to stimulate the activity of 3D polymerase, maybe through a nucleid acid chaperone activity. Localizes the viral replication complex to the surface of membranous vesicles. It inhibits host cell endoplasmic reticulum-to-Golgi apparatus transport and causes the disassembly of the Golgi complex, possibly through GBF1 interaction. This would result in depletion of MHC, trail receptors and IFN receptors at the host cell surface. Plays an essential role in viral RNA replication by recruiting ACBD3 and PI4KB at the viral replication sites, thereby allowing the formation of the rearranged membranous structures where viral replication takes place. Functionally, acts as a primer for viral RNA replication and remains covalently bound to viral genomic RNA. VPg is uridylylated prior to priming replication into VPg-pUpU. The oriI viral genomic sequence may act as a template for this. The VPg-pUpU is then used as primer on the genomic RNA poly(A) by the RNA-dependent RNA polymerase to replicate the viral genome. During genome replication, the VPg-RNA linkage is removed by the host TDP2, thereby accelerating replication. During the late stage of the replication cycle, host TDP2 is excluded from sites of viral RNA synthesis and encapsidation, allowing for the generation of progeny virions. In terms of biological role, involved in the viral replication complex and viral polypeptide maturation. It exhibits protease activity with a specificity and catalytic efficiency that is different from protease 3C. Protein 3CD lacks polymerase activity. Protein 3CD binds to the 5'UTR of the viral genome. Its function is as follows. Major viral protease that mediates proteolytic processing of the polyprotein. Cleaves host EIF5B, contributing to host translation shutoff. Also cleaves host PABPC1, contributing to host translation shutoff. Cleaves host RIGI and thus contributes to the inhibition of type I interferon production. Cleaves host NLRP1, triggers host N-glycine-mediated degradation of the autoinhibitory NLRP1 N-terminal fragment. Inhibits the integrated stress response (ISR) in the infected cell by cleaving host G3BP1. Stress granule formation is thus inhibited, which allows protein synthesis and viral replication. Replicates the viral genomic RNA on the surface of intracellular membranes. May form linear arrays of subunits that propagate along a strong head-to-tail interaction called interface-I. Covalently attaches UMP to a tyrosine of VPg, which is used to prime RNA synthesis. The positive stranded RNA genome is first replicated at virus induced membranous vesicles, creating a dsRNA genomic replication form. This dsRNA is then used as template to synthesize positive stranded RNA genomes. ss(+)RNA genomes are either translated, replicated or encapsidated. This Homo sapiens (Human) protein is Genome polyprotein.